Reading from the N-terminus, the 633-residue chain is MARTPAKYCDLVMKGGITSGIVYPNAALALARDYRFKNIGGTSAGAIAAAACAAAAVGDRRKQMKAAIAQPEERVGFEGLAKASANLASPGFIKDLLQPAAGAGQAFRLLVTLAGNTGVLRKGVALLGSVVRIAPVETLLLLAALAGLAYAVGGQTGMIAAALPAAICAYLGGVVFAVLRIARVLRRNLMGLCTGTAPDQPARRPRMVLTDWLHETLQALSGKASGQPLTFGDLWTAERYPGEPGSDRAVTLKMITTGISHQEPRSLPFESALFWFRRKEFEALFPKVVVDWMVEKAGEPVTVAGEDYYLLPHGADMPVLVATRMSLSFPLLISAVPLHEPARRESLPGSDGENEAEDTTSDEDEQKTVLDSTEALTTGGKKRRARPAAFRICWFSDGGISSNFPIHLFDRALPRWPTFAINLVYPETSDTGSRPEVFLPENNRQGWQRHYQPIARKSAVHELCAFVFAIVATMQNWRDLLQSRAPGHRERIVHVSLSPQEGGLNLAMSKEVLAAVSKKGTAAGEAFARFSFENHYWIRWRNLASALQRYTIDIAASDAYRPKIPDYEPAYALAHDATSKPPSYRFASKAEREEAARLLEKLIGEGEKWSGEGPDLTKTAPRPLPQLQIAPTY.

The region spanning 11 to 410 (LVMKGGITSG…SSNFPIHLFD (400 aa)) is the PNPLA domain. The next 3 helical transmembrane spans lie at 38–58 (NIGG…AAVG), 133–153 (IAPV…YAVG), and 159–179 (IAAA…FAVL). The GXSXG signature appears at 41–45 (GTSAG). The Nucleophile role is filled by Ser43. Positions 342–380 (ARRESLPGSDGENEAEDTTSDEDEQKTVLDSTEALTTGG) are disordered. A compositionally biased stretch (acidic residues) spans 352-365 (GENEAEDTTSDEDE). The active-site Proton acceptor is the Asp397. The DGA/G motif lies at 397-399 (DGG). Residues 605 to 624 (EGEKWSGEGPDLTKTAPRPL) form a disordered region.

It localises to the cell membrane. Functionally, this protein is non-essential for R.meliloti growth, but induces a heat-shock response in temperature-sensitive E.coli K165 by elevating levels of sigma 32 (mechanism unknown). This is RpoH suppressor (suhR) from Rhizobium meliloti (strain 1021) (Ensifer meliloti).